The following is a 103-amino-acid chain: Large ribosomal subunit protein bL21 (103 aa).

This sequence belongs to the bacterial ribosomal protein bL21 family. Part of the 50S ribosomal subunit. Contacts protein L20.

Functionally, this protein binds to 23S rRNA in the presence of protein L20. This Kineococcus radiotolerans (strain ATCC BAA-149 / DSM 14245 / SRS30216) protein is Large ribosomal subunit protein bL21.